Consider the following 338-residue polypeptide: tRNA N6-adenosine threonylcarbamoyltransferase (338 aa).

Residues His-111 and His-115 each contribute to the Fe cation site. Substrate is bound by residues 134-138 (LVSGG), Asp-167, Gly-180, and Asn-272. Asp-300 contacts Fe cation.

The protein belongs to the KAE1 / TsaD family. Requires Fe(2+) as cofactor.

It is found in the cytoplasm. It catalyses the reaction L-threonylcarbamoyladenylate + adenosine(37) in tRNA = N(6)-L-threonylcarbamoyladenosine(37) in tRNA + AMP + H(+). Its function is as follows. Required for the formation of a threonylcarbamoyl group on adenosine at position 37 (t(6)A37) in tRNAs that read codons beginning with adenine. Is involved in the transfer of the threonylcarbamoyl moiety of threonylcarbamoyl-AMP (TC-AMP) to the N6 group of A37, together with TsaE and TsaB. TsaD likely plays a direct catalytic role in this reaction. The chain is tRNA N6-adenosine threonylcarbamoyltransferase from Shewanella baltica (strain OS223).